The following is a 398-amino-acid chain: S-adenosylmethionine synthase 2 (398 aa).

Residue His-16 coordinates ATP. Asp-18 is a Mg(2+) binding site. Glu-51 is a binding site for K(+). 2 residues coordinate L-methionine: Glu-64 and Gln-108. The flexible loop stretch occupies residues Gln-108–Ala-118. Residues Asp-176 to Lys-178, Lys-242 to Phe-243, Asp-251, Arg-257 to Lys-258, Ala-274, and Lys-278 contribute to the ATP site. Asp-251 serves as a coordination point for L-methionine. Lys-282 is an L-methionine binding site.

It belongs to the AdoMet synthase family. Homotetramer; dimer of dimers. Mg(2+) is required as a cofactor. It depends on K(+) as a cofactor.

The protein resides in the cytoplasm. It catalyses the reaction L-methionine + ATP + H2O = S-adenosyl-L-methionine + phosphate + diphosphate. It functions in the pathway amino-acid biosynthesis; S-adenosyl-L-methionine biosynthesis; S-adenosyl-L-methionine from L-methionine: step 1/1. In terms of biological role, catalyzes the formation of S-adenosylmethionine (AdoMet) from methionine and ATP. The overall synthetic reaction is composed of two sequential steps, AdoMet formation and the subsequent tripolyphosphate hydrolysis which occurs prior to release of AdoMet from the enzyme. This is S-adenosylmethionine synthase 2 from Rhodopseudomonas palustris (strain BisB18).